The primary structure comprises 210 residues: Glutathione S-transferase P (210 aa).

In terms of domain architecture, GST N-terminal spans 2 to 81; that stretch reads PPYTIVYFPV…HLGRTLGLYG (80 aa). Tyrosine 4 bears the Phosphotyrosine; by EGFR mark. Glutathione-binding positions include tyrosine 8, arginine 14, tryptophan 39, lysine 45, and 52–53; that span reads QL. Threonine 62 bears the Phosphothreonine mark. A glutathione-binding site is contributed by 65 to 66; sequence QS. The GST C-terminal domain occupies 83–204; that stretch reads DQQEAALVDM…ASPEHMNRPI (122 aa). Lysine 103 and lysine 116 each carry N6-succinyllysine. Lysine 128 is subject to N6-acetyllysine.

It belongs to the GST superfamily. Pi family. As to quaternary structure, homodimer. Interacts with CDK5.

It localises to the cytoplasm. The protein resides in the mitochondrion. The protein localises to the nucleus. It carries out the reaction RX + glutathione = an S-substituted glutathione + a halide anion + H(+). The enzyme catalyses prostaglandin J2 + glutathione = prostaglandin J2-S-(R)-glutathione. It catalyses the reaction prostaglandin J2 + glutathione = prostaglandin J2-S-(S)-glutathione. The catalysed reaction is prostaglandin A2 + glutathione = prostaglandin A2-S-(S)-glutathione. It carries out the reaction 11(S)-hydroxy-14(S),15(S)-epoxy-(5Z,8Z,12E)-eicosatrienoate + glutathione = (11S,15S)-dihydroxy-14(R)-S-glutathionyl-(5Z,8Z,12E)-eicosatrienoate. Its function is as follows. Conjugation of reduced glutathione to a wide number of exogenous and endogenous hydrophobic electrophiles. Involved in the formation of glutathione conjugates of both prostaglandin A2 (PGA2) and prostaglandin J2 (PGJ2). Participates in the formation of novel hepoxilin regioisomers. Negatively regulates CDK5 activity via p25/p35 translocation to prevent neurodegeneration. The chain is Glutathione S-transferase P (GSTP1) from Bos taurus (Bovine).